Here is a 229-residue protein sequence, read N- to C-terminus: uncharacterized protein (229 aa).

A coiled-coil region spans residues 66–94 (GHEKLQIQSALRDIESAENQARVQQCNAK).

This is an uncharacterized protein from Ostreid herpesvirus 1 (isolate France) (OsHV-1).